A 126-amino-acid polypeptide reads, in one-letter code: Large ribosomal subunit protein eL32 (126 aa).

The protein belongs to the eukaryotic ribosomal protein eL32 family. Part of the 50S ribosomal subunit.

This Thermococcus kodakarensis (strain ATCC BAA-918 / JCM 12380 / KOD1) (Pyrococcus kodakaraensis (strain KOD1)) protein is Large ribosomal subunit protein eL32 (rpl32e).